The following is a 1107-amino-acid chain: Rho GTPase-activating protein 45 (1107 aa).

The tract at residues 1–99 (MFSRKKRELM…SPPESGEGPF (99 aa)) is disordered. Low complexity predominate over residues 37–55 (DSSNDLASSPPSNSSPVSS). Residues 56–66 (GTLKRPSSLSR) are compositionally biased toward polar residues. Coiled coils occupy residues 103–132 (EDIS…EELK) and 363–485 (NMRR…QSDQ). Positions 261 to 524 (EDVDVILQRS…SSKLYDLGQQ (264 aa)) constitute an F-BAR domain. Composition is skewed to basic and acidic residues over residues 414–423 (NATRAEEEQS), 434–444 (RRAEEEAKNRA), and 573–588 (ENKE…ERRG). Disordered regions lie at residues 414 to 444 (NATR…KNRA) and 564 to 595 (FNSQ…HQVH). Residues 671–716 (THRLRKLRTPSKCRECNSYVYFQGAECEECSLACHKKCLETLAIQC) form a Phorbol-ester/DAG-type zinc finger. The region spanning 730–942 (RDFSETALRS…TLIIFYSTIF (213 aa)) is the Rho-GAP domain. The disordered stretch occupies residues 981–1036 (LTPEYQIPVFKEPGASTVESDSESDGAEDIPGTWKPQTTRGHLTKEASVTSAEDIP). Residues 1015-1031 (KPQTTRGHLTKEASVTS) are compositionally biased toward polar residues.

It localises to the cytoplasm. The protein localises to the cell projection. Its subcellular location is the ruffle membrane. Contains a GTPase activator for the Rho-type GTPases (RhoGAP) domain that would be able to negatively regulate the actin cytoskeleton as well as cell spreading. However, also contains N-terminally a BAR-domin which is able to play an autoinhibitory effect on this RhoGAP activity. The sequence is that of Rho GTPase-activating protein 45 from Xenopus laevis (African clawed frog).